The chain runs to 826 residues: Villin-1 (826 aa).

Residues 1–734 form a core region; it reads MVELSKKVTG…YDELKAELGD (734 aa). The stretch at 27-76 is one Gelsolin-like 1 repeat; sequence MEMVPVPTKSYGNFYEGDCYVLLSTRKTGSGFSYNIHYWLGKNSSQDEQG. A 1,2-diacyl-sn-glycero-3-phospho-(1D-myo-inositol-4,5-bisphosphate) is bound at residue 112 to 119; that stretch reads KQGLIYKQ. A crucial for binding an actin filament region spans residues 129-137; the sequence is VETNTYNVQ. 138–146 lines the a 1,2-diacyl-sn-glycero-3-phospho-(1D-myo-inositol-4,5-bisphosphate) pocket; the sequence is RLLHVKGKK. 5 Gelsolin-like repeats span residues 148-188, 265-309, 408-457, 528-568, and 631-672; these read VVAA…AERL, LVIQ…EEKQ, QELV…DELA, TKAF…DERE, and FLAT…SEKE. The segment at 735 to 826 is headpiece; sequence NASIGQLVSG…QNLKKEKGLF (92 aa). Positions 760–826 constitute an HP domain; it reads PTKLETFPLD…QNLKKEKGLF (67 aa). The interval 820-823 is absolutely required for activity; the sequence is KKEK.

This sequence belongs to the villin/gelsolin family. In terms of assembly, monomer. Homodimer. Associates with F-actin; the association with F-actin is inhibited by tropomyosin. Post-translationally, phosphorylated on tyrosine residues. The unphosphorylated form increases the initial rate of actin-nucleating activity, whereas the tyrosine-phosphorylated form inhibits actin-nucleating activity, enhances actin-bundling activity and enhances actin-severing activity by reducing high Ca(2+) requirements. The tyrosine-phosphorylated form does not regulate actin-capping activity. Tyrosine phosphorylation is essential for cell migration: tyrosine phosphorylation sites in the N-terminus half regulate actin reorganization and cell morphology, whereas tyrosine phosphorylation sites in the C-terminus half regulate cell migration. Tyrosine phosphorylation is induced by epidermal growth factor (EGF) and stimulates cell migration. In terms of tissue distribution, specifically expressed in epithelial cells. Component of brush border microvilli.

It is found in the cytoplasm. Its subcellular location is the cytoskeleton. It localises to the cell projection. The protein localises to the microvillus. The protein resides in the lamellipodium. It is found in the ruffle. Its subcellular location is the filopodium tip. It localises to the filopodium. Epithelial cell-specific Ca(2+)-regulated actin-modifying protein that modulates the reorganization of microvillar actin filaments. Plays a role in the actin nucleation, actin filament bundle assembly, actin filament capping and severing. Binds phosphatidylinositol 4,5-bisphosphate (PIP2) and lysophosphatidic acid (LPA); binds LPA with higher affinity than PIP2. Binding to LPA increases its phosphorylation by SRC and inhibits all actin-modifying activities. Binding to PIP2 inhibits actin-capping and -severing activities but enhances actin-bundling activity. Regulates the intestinal epithelial cell morphology, cell invasion, cell migration and apoptosis. Protects against apoptosis induced by dextran sodium sulfate (DSS) in the gastrointestinal epithelium. Appears to regulate cell death by maintaining mitochondrial integrity. Enhances hepatocyte growth factor (HGF)-induced epithelial cell motility, chemotaxis and wound repair. Its actin-bundling activity is inhibited by tropomyosin. The polypeptide is Villin-1 (VIL1) (Gallus gallus (Chicken)).